The primary structure comprises 509 residues: MSAAAAIASPIPAAIAVVQQQRRGRSRGGGSGAAAVRCSAVAPTSAIAPILADLRLRCAAPLPVLRRVADAMASGMRAGLADDGAGELKMIPSHVYSLPTGNETGLFYALDLGGTNFRVLRVQLGGKDKRIIDTEFEQVSIPREIMHGITEDLFDFIASGLSRFVATEGDKFHLPQGRKRELGFTFSFPVNQTSIDSGILIKWTKGFAVSGTAGKDVVACLNAAMERQGLDMRVSALVNDTVGTLAGARYWDDDVMVAVILGTGTNACYIQRTEAIPKLQHLKLETGNTIINTEWGAFSDGLPLTEFDREMDDESINPGEQIFEKTISGMYLGEIVRRVLVKMAEVSDLFGHSFPKKLAEPFVLRTPHLCAMQQDTSDNLGEVESILSDVIGVSQASLLARRVTVEVSDCIIRRGGRLAGAGIVGILEKMENDSRGHIFGRRTVVAMDGGLYEKYPQYRRYMKEAVAELLGPERSNRIAIEHTKDGSGIGAALLAAANSKYAAAQISTR.

A chloroplast-targeting transit peptide spans 1–37 (MSAAAAIASPIPAAIAVVQQQRRGRSRGGGSGAAAVR). The region spanning 45–496 (SAIAPILADL…SGIGAALLAA (452 aa)) is the Hexokinase domain. Residues 100–238 (TGNETGLFYA…GLDMRVSALV (139 aa)) are hexokinase small subdomain. The ADP site is built by glycine 114, threonine 115, and asparagine 116. D-glucose contacts are provided by threonine 204, lysine 205, asparagine 239, and aspartate 240. The interval 239 to 485 (NDTVGTLAGA…NRIAIEHTKD (247 aa)) is hexokinase large subdomain. ADP is bound at residue threonine 263. Asparagine 266, glutamate 294, and glutamate 324 together coordinate D-glucose. An ADP-binding site is contributed by glycine 450.

This sequence belongs to the hexokinase family. Expressed in roots, leaves, flowers, immature seeds, endosperm and seed coat.

It is found in the plastid. The protein localises to the chloroplast stroma. It carries out the reaction a D-hexose + ATP = a D-hexose 6-phosphate + ADP + H(+). It catalyses the reaction D-fructose + ATP = D-fructose 6-phosphate + ADP + H(+). The enzyme catalyses D-glucose + ATP = D-glucose 6-phosphate + ADP + H(+). The protein operates within carbohydrate metabolism; hexose metabolism. It participates in carbohydrate degradation; glycolysis; D-glyceraldehyde 3-phosphate and glycerone phosphate from D-glucose: step 1/4. Fructose and glucose phosphorylating enzyme. This is Hexokinase-4, chloroplastic (HXK4) from Oryza sativa subsp. japonica (Rice).